A 55-amino-acid polypeptide reads, in one-letter code: Male-specific sperm protein Mst84Dc (55 aa).

This sequence belongs to the MST(3)CGP family. Testis.

This is Male-specific sperm protein Mst84Dc (Mst84Dc) from Drosophila melanogaster (Fruit fly).